Consider the following 203-residue polypeptide: Recombination protein RecR (203 aa).

The C4-type zinc-finger motif lies at 56–71 (CAVCGNVSDDERCRIC). Residues 79–179 (ALVCVVEEPK…TVTRIASGLP (101 aa)) form the Toprim domain.

The protein belongs to the RecR family.

Its function is as follows. May play a role in DNA repair. It seems to be involved in an RecBC-independent recombinational process of DNA repair. It may act with RecF and RecO. This chain is Recombination protein RecR, found in Mycobacterium ulcerans (strain Agy99).